A 422-amino-acid chain; its full sequence is MPHLFSKACQYFPGGVNSPVRACRSVDITPPVVTRASGDFFTDSQGKTYIDFCGSWGSLIHGHSHPYICEAIQQGLQRGCSYGLTSEQEISFAEEIFSYLEISNDHKIRFMSTGSEATMTAVRLARGVTERPIIIKFSGCYHGHSDVFLQEIHFQQTILDTVDLTQPLTLSLPFNNLSLFLDVMNQIGHRVAGVIFEPICANMGVVLPLPGFIEGIIQTCRKTGSLSIMDEVVTGFRVSKGGAAALHPLKPDILVFGKILGGGLPASAVCAPAAIMDYLAPVGKVFQAGTLSGNPLAMSAGKASIALCREKNFYTQLSAIEDDFLSPIEQMIQQSGIPVTLVRYGNLFSFFFSENRPNNLKEVQLCNTDIFRTFYQQAFLKGIYLSPSPFEASFLSTAHSMENLNYAQQVLIESLEQACSLV.

The residue at position 258 (Lys258) is an N6-(pyridoxal phosphate)lysine.

Belongs to the class-III pyridoxal-phosphate-dependent aminotransferase family. HemL subfamily. Homodimer. It depends on pyridoxal 5'-phosphate as a cofactor.

The protein resides in the cytoplasm. It catalyses the reaction (S)-4-amino-5-oxopentanoate = 5-aminolevulinate. The protein operates within porphyrin-containing compound metabolism; protoporphyrin-IX biosynthesis; 5-aminolevulinate from L-glutamyl-tRNA(Glu): step 2/2. In Chlamydia muridarum (strain MoPn / Nigg), this protein is Glutamate-1-semialdehyde 2,1-aminomutase.